Here is a 1119-residue protein sequence, read N- to C-terminus: Leucine-rich repeats and immunoglobulin-like domains protein 3 (1119 aa).

Residues 1 to 24 (MSAPSLRARAAGLGLLLCAVLGRA) form the signal peptide. Residues 38–74 (PSGVAAERPCPTTCRCLGDLLDCSRKRLARLPEPLPS) enclose the LRRNT domain. 15 LRR repeats span residues 75-96 (WVAR…SMSH), 99-120 (SLRE…GPVS), 122-142 (NITL…EHLK), 146-167 (SLET…FPAL), 168-189 (QLKY…YFDN), 193-214 (TLLV…MFKL), 216-237 (QLQH…TFQG), 240-261 (ALKS…AFWG), 264-285 (NMEI…WLYG), 288-309 (MLQE…AWEF), 312-333 (KLSE…SFLG), 336-357 (LLNT…AFRG), 360-382 (SLKT…NGAF), 387-408 (KLRR…AFTG), and 411-432 (ALEH…AFSQ). N-linked (GlcNAc...) asparagine glycans are attached at residues Asn122 and Asn156. Asn274 carries N-linked (GlcNAc...) asparagine glycosylation. N-linked (GlcNAc...) asparagine glycosylation is found at Asn442, Asn469, and Asn515. The region spanning 444-495 (SSLLCDCQLKWLPQWVAENNFQSFVNASCAHPQLLKGRSIFAVSPDGFVCDD) is the LRRCT domain. Ig-like C2-type domains are found at residues 499 to 598 (PQIT…AKLT), 603 to 692 (PSFT…ATLT), and 697 to 783 (PSFL…VRLS). Disulfide bonds link Cys520–Cys581 and Cys624–Cys676. Residues Asn688 and Asn729 are each glycosylated (N-linked (GlcNAc...) asparagine). Cys718 and Cys767 are joined by a disulfide. The helical transmembrane segment at 810–830 (VVIIAVVCCVVGTSLVWVVII) threads the bilayer. N-linked (GlcNAc...) asparagine glycans are attached at residues Asn905, Asn987, Asn999, and Asn1016. The segment at 1073-1093 (SSPDLDSGSEEDGKERTDFQE) is disordered. Residues 1083–1093 (EDGKERTDFQE) are compositionally biased toward basic and acidic residues.

In terms of assembly, interacts with EGFR, ERBB2 and ERBB4 (in vitro). Widely expressed.

It localises to the cell membrane. It is found in the cytoplasmic vesicle membrane. Its function is as follows. May play a role in craniofacial and inner ear morphogenesis during embryonic development. May act within the otic vesicle epithelium to control formation of the lateral semicircular canal in the inner ear, possibly by restricting the expression of NTN1. The polypeptide is Leucine-rich repeats and immunoglobulin-like domains protein 3 (LRIG3) (Homo sapiens (Human)).